The primary structure comprises 275 residues: 2-dehydro-3-deoxyphosphooctonate aldolase (275 aa).

It belongs to the KdsA family.

The protein localises to the cytoplasm. The catalysed reaction is D-arabinose 5-phosphate + phosphoenolpyruvate + H2O = 3-deoxy-alpha-D-manno-2-octulosonate-8-phosphate + phosphate. Its pathway is carbohydrate biosynthesis; 3-deoxy-D-manno-octulosonate biosynthesis; 3-deoxy-D-manno-octulosonate from D-ribulose 5-phosphate: step 2/3. It participates in bacterial outer membrane biogenesis; lipopolysaccharide biosynthesis. The polypeptide is 2-dehydro-3-deoxyphosphooctonate aldolase (Francisella tularensis subsp. holarctica (strain LVS)).